Consider the following 57-residue polypeptide: Large ribosomal subunit protein bL32 (57 aa).

The interval 1–38 (MAVQQNKPTRSKRGMRRSHDALTAVTSLSVDKTSGEKH) is disordered.

Belongs to the bacterial ribosomal protein bL32 family.

The polypeptide is Large ribosomal subunit protein bL32 (Escherichia coli O7:K1 (strain IAI39 / ExPEC)).